The sequence spans 229 residues: Ribonuclease HII (229 aa).

Residues 34 to 223 (WPVAGADEAG…LRKSEDGPEM (190 aa)) form the RNase H type-2 domain. Residues Asp40, Glu41, and Asp131 each contribute to the a divalent metal cation site. Residues 209–229 (MSFRPLRKSEDGPEMDELIPE) are disordered. Over residues 220–229 (GPEMDELIPE) the composition is skewed to acidic residues.

Belongs to the RNase HII family. It depends on Mn(2+) as a cofactor. Mg(2+) is required as a cofactor.

Its subcellular location is the cytoplasm. The enzyme catalyses Endonucleolytic cleavage to 5'-phosphomonoester.. In terms of biological role, endonuclease that specifically degrades the RNA of RNA-DNA hybrids. This chain is Ribonuclease HII, found in Rhizobium etli (strain CIAT 652).